Consider the following 348-residue polypeptide: Small ribosomal subunit biogenesis GTPase RsgA (348 aa).

Basic residues predominate over residues 1–14 (MAKRKLSKQQKWRI). The disordered stretch occupies residues 1 to 39 (MAKRKLSKQQKWRIQKIQDERTKRATRKETQLESQLSGG). Basic and acidic residues predominate over residues 16–31 (KIQDERTKRATRKETQ). The CP-type G domain occupies 116-275 (FGQLKPIAAN…LIDSPGIREF (160 aa)). GTP-binding positions include 163 to 166 (NKQD) and 217 to 225 (GQSGVGKSS). Residues C299, C304, H306, and C312 each contribute to the Zn(2+) site.

Belongs to the TRAFAC class YlqF/YawG GTPase family. RsgA subfamily. As to quaternary structure, monomer. Associates with 30S ribosomal subunit, binds 16S rRNA. The cofactor is Zn(2+).

It is found in the cytoplasm. One of several proteins that assist in the late maturation steps of the functional core of the 30S ribosomal subunit. Helps release RbfA from mature subunits. May play a role in the assembly of ribosomal proteins into the subunit. Circularly permuted GTPase that catalyzes slow GTP hydrolysis, GTPase activity is stimulated by the 30S ribosomal subunit. This is Small ribosomal subunit biogenesis GTPase RsgA from Hahella chejuensis (strain KCTC 2396).